A 95-amino-acid chain; its full sequence is MSLDAAVKKQIITEFGTKEGDTGSPEVQVALLSRRISDLTEHLKTHKHDHHSRRGLLILVGQRRRLLQYLAKKDIQRFRALVERLGIRRGAAGAR.

The protein belongs to the universal ribosomal protein uS15 family. Part of the 30S ribosomal subunit. Forms a bridge to the 50S subunit in the 70S ribosome, contacting the 23S rRNA.

One of the primary rRNA binding proteins, it binds directly to 16S rRNA where it helps nucleate assembly of the platform of the 30S subunit by binding and bridging several RNA helices of the 16S rRNA. Its function is as follows. Forms an intersubunit bridge (bridge B4) with the 23S rRNA of the 50S subunit in the ribosome. This Streptomyces coelicolor (strain ATCC BAA-471 / A3(2) / M145) protein is Small ribosomal subunit protein uS15.